A 199-amino-acid chain; its full sequence is Ribonuclease HII (199 aa).

An RNase H type-2 domain is found at 10 to 199; that stretch reads HLVAGVDEVG…VKRALGLASN (190 aa). Residues D16, E17, and D108 each contribute to the a divalent metal cation site.

This sequence belongs to the RNase HII family. Mn(2+) is required as a cofactor. The cofactor is Mg(2+).

It localises to the cytoplasm. The catalysed reaction is Endonucleolytic cleavage to 5'-phosphomonoester.. Endonuclease that specifically degrades the RNA of RNA-DNA hybrids. The protein is Ribonuclease HII of Klebsiella pneumoniae (strain 342).